The chain runs to 635 residues: Threonine--tRNA ligase (635 aa).

One can recognise a TGS domain in the interval 1-61; sequence MINIKFPDGS…NHDCELRLIT (61 aa). The catalytic stretch occupies residues 242–533; sequence DHRKIGKALD…LIEHYAGNMP (292 aa). C333, H384, and H510 together coordinate Zn(2+).

The protein belongs to the class-II aminoacyl-tRNA synthetase family. Homodimer. Zn(2+) is required as a cofactor.

The protein localises to the cytoplasm. It carries out the reaction tRNA(Thr) + L-threonine + ATP = L-threonyl-tRNA(Thr) + AMP + diphosphate + H(+). Functionally, catalyzes the attachment of threonine to tRNA(Thr) in a two-step reaction: L-threonine is first activated by ATP to form Thr-AMP and then transferred to the acceptor end of tRNA(Thr). Also edits incorrectly charged L-seryl-tRNA(Thr). This is Threonine--tRNA ligase from Francisella philomiragia subsp. philomiragia (strain ATCC 25017 / CCUG 19701 / FSC 153 / O#319-036).